We begin with the raw amino-acid sequence, 1825 residues long: Tail fiber protein (1825 aa).

Coiled-coil stretches lie at residues 393–466 (VDMS…NSLE), 681–701 (DGVQ…SQKV), 843–891 (KGDQ…NMLA), and 975–998 (DVAK…LQNI).

The protein localises to the virion. Structural protein, a component of a tail fiber. The chain is Tail fiber protein from Enterococcus faecalis (Streptococcus faecalis).